The sequence spans 66 residues: Large ribosomal subunit protein bL33c (66 aa).

It belongs to the bacterial ribosomal protein bL33 family.

The protein resides in the plastid. It is found in the chloroplast. The protein is Large ribosomal subunit protein bL33c of Oryza nivara (Indian wild rice).